The primary structure comprises 332 residues: 5,10-methylenetetrahydromethanopterin reductase (332 aa).

It belongs to the mer family.

It localises to the cytoplasm. It catalyses the reaction 5-methyl-5,6,7,8-tetrahydromethanopterin + oxidized coenzyme F420-(gamma-L-Glu)(n) + H(+) = 5,10-methylenetetrahydromethanopterin + reduced coenzyme F420-(gamma-L-Glu)(n). The protein operates within metabolic intermediate metabolism; lactate oxidation. Functionally, catalyzes the oxidation of methyl-H(4)MPT to methylene-H(4)MPT. This Archaeoglobus fulgidus (strain ATCC 49558 / DSM 4304 / JCM 9628 / NBRC 100126 / VC-16) protein is 5,10-methylenetetrahydromethanopterin reductase.